A 94-amino-acid chain; its full sequence is UPF0768 protein YBL029C-A (94 aa).

The protein belongs to the UPF0768 family.

The protein resides in the cell membrane. This chain is UPF0768 protein YBL029C-A, found in Saccharomyces cerevisiae (strain ATCC 204508 / S288c) (Baker's yeast).